We begin with the raw amino-acid sequence, 143 residues long: Transmembrane protein 207 (143 aa).

A signal peptide spans 1-29 (MSTSSPFRVASKIVTAGCLCLPLFQRVLS). The helical transmembrane segment at 52-72 (IWFFLLIFLVVLLCGVVLFCL) threads the bilayer.

Interacts with WWOX.

It localises to the membrane. This chain is Transmembrane protein 207, found in Mus musculus (Mouse).